Here is a 930-residue protein sequence, read N- to C-terminus: Pyruvate dehydrogenase E1 component (930 aa).

Positions Met-1–Leu-10 are enriched in basic and acidic residues. The tract at residues Met-1 to Asp-21 is disordered. An Isoglutamyl lysine isopeptide (Lys-Gln) (interchain with Q-Cter in protein Pup) cross-link involves residue Lys-375.

Homodimer. Part of the PDH complex, consisting of multiple copies of AceE (E1), DlaT (E2) and Lpd (E3). Requires Mg(2+) as cofactor. Thiamine diphosphate is required as a cofactor.

The enzyme catalyses N(6)-[(R)-lipoyl]-L-lysyl-[protein] + pyruvate + H(+) = N(6)-[(R)-S(8)-acetyldihydrolipoyl]-L-lysyl-[protein] + CO2. In terms of biological role, component of the pyruvate dehydrogenase (PDH) complex, that catalyzes the overall conversion of pyruvate to acetyl-CoA and CO(2). AceE has reductase activity with pyruvate but does not react with 2-oxoglutarate. The sequence is that of Pyruvate dehydrogenase E1 component (aceE) from Mycobacterium tuberculosis (strain ATCC 25618 / H37Rv).